A 456-amino-acid chain; its full sequence is Alcohol acyl transferase 1 allele GSc (456 aa).

Active-site proton acceptor residues include His165 and Asn386.

This sequence belongs to the plant acyltransferase family. As to expression, expressed at very low levels in the skin of ripe fruit.

Involved in the biosynthesis of volatile esters which confer ripe apple fruit flavor. Alcohol acyl transferase that can use a wide range of alcohols as substrate to produce esters. In Malus domestica (Apple), this protein is Alcohol acyl transferase 1 allele GSc.